Here is a 179-residue protein sequence, read N- to C-terminus: Large ribosomal subunit protein uL5 (179 aa).

This sequence belongs to the universal ribosomal protein uL5 family. Part of the 50S ribosomal subunit; part of the 5S rRNA/L5/L18/L25 subcomplex. Contacts the 5S rRNA and the P site tRNA. Forms a bridge to the 30S subunit in the 70S ribosome.

Functionally, this is one of the proteins that bind and probably mediate the attachment of the 5S RNA into the large ribosomal subunit, where it forms part of the central protuberance. In the 70S ribosome it contacts protein S13 of the 30S subunit (bridge B1b), connecting the 2 subunits; this bridge is implicated in subunit movement. Contacts the P site tRNA; the 5S rRNA and some of its associated proteins might help stabilize positioning of ribosome-bound tRNAs. The chain is Large ribosomal subunit protein uL5 from Marinomonas sp. (strain MWYL1).